The primary structure comprises 257 residues: Homeobox protein goosecoid (257 aa).

The homeobox DNA-binding region spans 160-219 (KRRHRTIFTDEQLEALENLFQETKYPDVGTREQLARKVHLREEKVEVWFKNRRAKWRRQK). The tract at residues 213–257 (AKWRRQKRSSSEESENAEKWNKTSSSKASPEKREEEGKSDLDSDS) is disordered. A compositionally biased stretch (basic and acidic residues) spans 241–257 (SPEKREEEGKSDLDSDS).

Belongs to the paired homeobox family. Bicoid subfamily.

It is found in the nucleus. In terms of biological role, regulates chordin (CHRD). May play a role in spatial programing within discrete embryonic fields or lineage compartments during organogenesis. In concert with NKX3-2, plays a role in defining the structural components of the middle ear; required for the development of the entire tympanic ring. Probably involved in the regulatory networks that define neural crest cell fate specification and determine mesoderm cell lineages in mammals. The sequence is that of Homeobox protein goosecoid (GSC) from Gorilla gorilla gorilla (Western lowland gorilla).